We begin with the raw amino-acid sequence, 421 residues long: Ubiquitin-like modifier-activating enzyme 5 (421 aa).

The ATP site is built by G89, D110, K133, N156, and N191. C233 and C236 together coordinate Zn(2+). C257 functions as the Glycyl thioester intermediate in the catalytic mechanism. The Zn(2+) site is built by C310 and C315.

Belongs to the ubiquitin-activating E1 family. UBA5 subfamily.

Its function is as follows. E1-like enzyme which activates UFM1. This chain is Ubiquitin-like modifier-activating enzyme 5, found in Oryza sativa subsp. japonica (Rice).